Here is a 285-residue protein sequence, read N- to C-terminus: Probable endonuclease 4 (285 aa).

Zn(2+) is bound by residues H69, H109, E145, D179, H182, H216, D229, H231, and E261.

The protein belongs to the AP endonuclease 2 family. Zn(2+) serves as cofactor.

The enzyme catalyses Endonucleolytic cleavage to 5'-phosphooligonucleotide end-products.. In terms of biological role, endonuclease IV plays a role in DNA repair. It cleaves phosphodiester bonds at apurinic or apyrimidinic (AP) sites, generating a 3'-hydroxyl group and a 5'-terminal sugar phosphate. This is Probable endonuclease 4 from Yersinia pestis bv. Antiqua (strain Antiqua).